Reading from the N-terminus, the 66-residue chain is UPF0337 protein SAG0606 (66 aa).

Residues 1 to 10 (MSQEKLKSKV) show a composition bias toward basic and acidic residues. The tract at residues 1–23 (MSQEKLKSKVEQASGSLKEGAGK) is disordered.

The protein belongs to the UPF0337 (CsbD) family.

This Streptococcus agalactiae serotype V (strain ATCC BAA-611 / 2603 V/R) protein is UPF0337 protein SAG0606.